The sequence spans 434 residues: Methyl-coenzyme M reductase subunit beta (434 aa).

Y365 provides a ligand contact to coenzyme M. G367 contacts coenzyme B.

It belongs to the methyl-coenzyme M reductase beta subunit family. As to quaternary structure, MCR is a hexamer of two alpha, two beta, and two gamma chains, forming a dimer of heterotrimers. Coenzyme F430 serves as cofactor.

Its subcellular location is the cytoplasm. The catalysed reaction is coenzyme B + methyl-coenzyme M = methane + coenzyme M-coenzyme B heterodisulfide. It functions in the pathway one-carbon metabolism; methyl-coenzyme M reduction; methane from methyl-coenzyme M: step 1/1. Its function is as follows. Component of the methyl-coenzyme M reductase (MCR) I that catalyzes the reductive cleavage of methyl-coenzyme M (CoM-S-CH3 or 2-(methylthio)ethanesulfonate) using coenzyme B (CoB or 7-mercaptoheptanoylthreonine phosphate) as reductant which results in the production of methane and the mixed heterodisulfide of CoB and CoM (CoM-S-S-CoB). This is the final step in methanogenesis. The sequence is that of Methyl-coenzyme M reductase subunit beta (mcrB) from Methanosarcina barkeri (strain Fusaro / DSM 804).